Consider the following 325-residue polypeptide: DNA-directed RNA polymerase subunit alpha (325 aa).

The interval 1 to 239 (MQQFLRYNIN…DHLKPLIDIN (239 aa)) is alpha N-terminal domain (alpha-NTD). The tract at residues 255 to 325 (EKNKKLSIPI…ELYDLKLKNN (71 aa)) is alpha C-terminal domain (alpha-CTD).

This sequence belongs to the RNA polymerase alpha chain family. In terms of assembly, homodimer. The RNAP catalytic core consists of 2 alpha, 1 beta, 1 beta' and 1 omega subunit. When a sigma factor is associated with the core the holoenzyme is formed, which can initiate transcription.

The catalysed reaction is RNA(n) + a ribonucleoside 5'-triphosphate = RNA(n+1) + diphosphate. Functionally, DNA-dependent RNA polymerase catalyzes the transcription of DNA into RNA using the four ribonucleoside triphosphates as substrates. The protein is DNA-directed RNA polymerase subunit alpha of Mycoplasmoides gallisepticum (strain R(low / passage 15 / clone 2)) (Mycoplasma gallisepticum).